The primary structure comprises 237 residues: (5-formylfuran-3-yl)methyl phosphate synthase (237 aa).

Lys27 functions as the Schiff-base intermediate with substrate in the catalytic mechanism. Residue Lys85 is the Proton acceptor of the active site.

The protein belongs to the MfnB family.

It carries out the reaction 2 D-glyceraldehyde 3-phosphate = 4-(hydroxymethyl)-2-furancarboxaldehyde phosphate + phosphate + 2 H2O. Its pathway is cofactor biosynthesis; methanofuran biosynthesis. In terms of biological role, catalyzes the formation of 4-(hydroxymethyl)-2-furancarboxaldehyde phosphate (4-HFC-P) from two molecules of glyceraldehyde-3-P (GA-3-P). This is (5-formylfuran-3-yl)methyl phosphate synthase from Methanobrevibacter smithii (strain ATCC 35061 / DSM 861 / OCM 144 / PS).